Consider the following 511-residue polypeptide: Lysine--tRNA ligase 2 (511 aa).

Residues 1–22 are disordered; the sequence is MTMEINNTDPFEKMPLPDDSGL. Mg(2+) is bound by residues glutamate 421 and glutamate 428.

Belongs to the class-II aminoacyl-tRNA synthetase family. In terms of assembly, homodimer. The cofactor is Mg(2+).

The protein localises to the cytoplasm. It catalyses the reaction tRNA(Lys) + L-lysine + ATP = L-lysyl-tRNA(Lys) + AMP + diphosphate. In Methanosarcina mazei (strain ATCC BAA-159 / DSM 3647 / Goe1 / Go1 / JCM 11833 / OCM 88) (Methanosarcina frisia), this protein is Lysine--tRNA ligase 2.